Consider the following 761-residue polypeptide: 5-methyltetrahydropteroyltriglutamate--homocysteine methyltransferase (761 aa).

5-methyltetrahydropteroyltri-L-glutamate is bound by residues 16-19 and lysine 116; that span reads RELK. Residues 435 to 437 and glutamate 488 each bind L-homocysteine; that span reads IGS. Residues 435–437 and glutamate 488 contribute to the L-methionine site; that span reads IGS. 5-methyltetrahydropteroyltri-L-glutamate-binding positions include 519 to 520 and tryptophan 565; that span reads RC. Aspartate 603 is a binding site for L-homocysteine. Residue aspartate 603 coordinates L-methionine. Glutamate 609 contributes to the 5-methyltetrahydropteroyltri-L-glutamate binding site. Residues histidine 645, cysteine 647, and glutamate 669 each contribute to the Zn(2+) site. Catalysis depends on histidine 698, which acts as the Proton donor. Cysteine 730 is a binding site for Zn(2+).

Belongs to the vitamin-B12 independent methionine synthase family. Requires Zn(2+) as cofactor.

It carries out the reaction 5-methyltetrahydropteroyltri-L-glutamate + L-homocysteine = tetrahydropteroyltri-L-glutamate + L-methionine. It functions in the pathway amino-acid biosynthesis; L-methionine biosynthesis via de novo pathway; L-methionine from L-homocysteine (MetE route): step 1/1. Catalyzes the transfer of a methyl group from 5-methyltetrahydrofolate to homocysteine resulting in methionine formation. This is 5-methyltetrahydropteroyltriglutamate--homocysteine methyltransferase from Hahella chejuensis (strain KCTC 2396).